The following is a 494-amino-acid chain: MSSEDSLKSLSLDYLSLLINGQAFSDVAFSVEGRLVHAHRCVLAARSLFFRKLFCGLDPNHQPPPPPPPLNWPMAGGGGGGSGGGGRGGAGGGGGAPATPELVIPVSSIRYEVLVLVLQFLYSGQASVAAPKSGPLPGCGARGCWHTRCGAAVDLALDTLAAARSFGVEQLALLVQKQLESMVKEASVDDVMKVLMASRKFEMQELWATCSHLVARSGLSADLLAKHLPIDVVAKIEEIRAKSPLAAVAAPRSPFLTHHYLPMNPASSAADRDNKIRRMRRALDAADIELVKLMVMGEGLDLDDALAVHYAVQHCNRDVVKALLELGAADVNSRAGPTGKTALHLAAEMVSPDMVSVLLDHHADPNSRTLDGVTPLDVLRSLTSEFLFKGAVPGLTHIEPNKLRLCLELVQSAVMVTTRDDGAPVTGGAEAGGSDGGNFPRSDADDSLVSLTMNSTLMYQGQEMAAAVAAGEGRKSNNGRGSPPPAMYFPNGFA.

The region spanning S25–A130 is the BTB domain. Residues N60–G94 form a disordered region. Positions H61–N71 are enriched in pro residues. A compositionally biased stretch (gly residues) spans A75 to G94. The segment at L136–G150 adopts a C2HC NPR-type zinc-finger fold. Positions 139, 144, 146, and 149 each coordinate Zn(2+). ANK repeat units lie at residues N274 to L302, D303 to S333, T338 to S367, and D371 to L405. 2 disordered regions span residues D421 to D443 and A469 to A494.

The protein belongs to the plant 'ANKYRIN-BTB/POZ' family. 'NOOT-BOP-COCH-like' (NBCL) subfamily. Homodimer. Interacts with TGAL5, TGAL7, TGAL8 and TGAL9.

The protein localises to the nucleus. It localises to the cytoplasm. It participates in protein modification; protein ubiquitination. In terms of biological role, may act as a substrate-specific adapter of an E3 ubiquitin-protein ligase complex (CUL3-RBX1-BTB) which mediates the ubiquitination and subsequent proteasomal degradation of target proteins. Transcriptional co-regulator involved in the promotion of leaf and floral meristem fate and determinacy. Required for the abscission of senescent organs, probably by regulating the cell wall disorganization in abscission zones (AZs, e.g. pulvini at the base of leaves). This chain is BTB/POZ domain and ankyrin repeat-containing protein NH5.1, found in Oryza sativa subsp. japonica (Rice).